We begin with the raw amino-acid sequence, 1394 residues long: DNA-directed RNA polymerase subunit beta'' (1394 aa).

Positions 224, 295, 302, and 305 each coordinate Zn(2+).

The protein belongs to the RNA polymerase beta' chain family. RpoC2 subfamily. In terms of assembly, in plastids the minimal PEP RNA polymerase catalytic core is composed of four subunits: alpha, beta, beta', and beta''. When a (nuclear-encoded) sigma factor is associated with the core the holoenzyme is formed, which can initiate transcription. It depends on Zn(2+) as a cofactor.

It is found in the plastid. Its subcellular location is the chloroplast. It carries out the reaction RNA(n) + a ribonucleoside 5'-triphosphate = RNA(n+1) + diphosphate. Functionally, DNA-dependent RNA polymerase catalyzes the transcription of DNA into RNA using the four ribonucleoside triphosphates as substrates. The protein is DNA-directed RNA polymerase subunit beta'' of Cucumis sativus (Cucumber).